Reading from the N-terminus, the 397-residue chain is Gamma tubulin complex adapter mto2 (397 aa).

A compositionally biased stretch (basic and acidic residues) spans 1-13 (MSEHNYQSDREVA). 3 disordered regions span residues 1 to 44 (MSEH…WRAG), 269 to 298 (YTSS…PFPS), and 346 to 397 (RSDP…TPSP). 4 stretches are compositionally biased toward polar residues: residues 22-37 (ASAN…STPR), 269-281 (YTSS…QRMA), 352-369 (RHVS…SPTS), and 382-397 (SPAS…TPSP). 2 positions are modified to phosphoserine: serine 366 and serine 396.

In terms of assembly, interacts with mto1; the interaction is direct and required for efficient binding to the gamma-tubulin complex. Interacts with gamma tubulin complex subunits alp4, alp6 and gtb1.

It localises to the cytoplasm. Its subcellular location is the cytoskeleton. The protein localises to the microtubule organizing center. It is found in the spindle pole body. Acts together with mto1 to promote nucleation of at least a subset of cytoplasmic microtubules, by recruiting the gamma-tubulin complex to the interphase microtubule organizing center (iMTOC) and to the equatorial MTOC (eMTOC) during anaphase. Does not appear to be required for cytoplasmic astral microtubule nucleation from the spindle pole body (SPB). Required to establish the eMTOC, and thereby to tether the cytokinetic actin ring. The chain is Gamma tubulin complex adapter mto2 from Schizosaccharomyces pombe (strain 972 / ATCC 24843) (Fission yeast).